A 442-amino-acid polypeptide reads, in one-letter code: Transducin beta-like protein 2 (442 aa).

Residues Glu36–His71 are disordered. The segment covering Ser52–Lys65 has biased composition (basic residues). WD repeat units follow at residues Ser84 to His123, Val130 to Phe170, Lys182 to Asn222, Asn224 to Gln263, Gly273 to Gln312, Glu323 to Tyr362, and Val366 to Val404. A Glycyl lysine isopeptide (Lys-Gly) (interchain with G-Cter in SUMO2) cross-link involves residue Lys164. Residue Thr428 is modified to Phosphothreonine.

In Mus musculus (Mouse), this protein is Transducin beta-like protein 2 (Tbl2).